The sequence spans 108 residues: Large ribosomal subunit protein bL31B (108 aa).

The tract at residues 86–108 (KPETVVEDVLPKGKKKSPAKKKK) is disordered. Positions 97–108 (KGKKKSPAKKKK) are enriched in basic residues.

This sequence belongs to the bacterial ribosomal protein bL31 family. Type B subfamily. As to quaternary structure, part of the 50S ribosomal subunit.

The polypeptide is Large ribosomal subunit protein bL31B (Chlamydia trachomatis serovar L2 (strain ATCC VR-902B / DSM 19102 / 434/Bu)).